The following is a 35-amino-acid chain: Mu-theraphotoxin-Pm1a (35 aa).

Intrachain disulfides connect Cys-3–Cys-17, Cys-10–Cys-22, and Cys-16–Cys-29. Phenylalanine amide is present on Phe-35.

This sequence belongs to the neurotoxin 10 (Hwtx-1) family. 62 (Vatx) subfamily. Expressed by the venom gland.

Its subcellular location is the secreted. Gating-modifier toxin with weak activity on Nav1.7/SCN9A and Nav1.8/SCN10A. Inhibits Nav1.7/SCN9A peak current (IC(50)=334 nM) and shifts the voltage dependence of activation to more depolarised membrane potentials. Shows 21% peak current inhibition (at 10 uM) on Nav1.8/SCN10A sodium channels. This Poecilotheria metallica (Metallic blue ornamental tree spider) protein is Mu-theraphotoxin-Pm1a.